The primary structure comprises 115 residues: MGSQVHLLSFLLLWISDTRAETTLTQSPAFMSATPGDKVNISCKASQDIDDDMNWYQQKPGEAAIFIIQEATTLVPGIPPRFSGSGYGTDFTLTINNIESEDAAYYFCLQHDNFP.

A signal peptide spans 1–20 (MGSQVHLLSFLLLWISDTRA). Residues 21–43 (ETTLTQSPAFMSATPGDKVNISC) are framework-1. An Ig-like domain is found at 22-115 (TTLTQSPAFM…YFCLQHDNFP (94 aa)). A glycan (N-linked (GlcNAc...) asparagine) is linked at N40. S42 bears the Phosphoserine mark. The cysteines at positions 43 and 108 are disulfide-linked. The tract at residues 44–54 (KASQDIDDDMN) is complementarity-determining-1. Positions 55–69 (WYQQKPGEAAIFIIQ) are framework-2. The complementarity-determining-2 stretch occupies residues 70–76 (EATTLVP). The segment at 77 to 108 (GIPPRFSGSGYGTDFTLTINNIESEDAAYYFC) is framework-3. The interval 109-115 (LQHDNFP) is complementarity-determining-3.

As to quaternary structure, immunoglobulins are composed of two identical heavy chains and two identical light chains; disulfide-linked.

It localises to the secreted. The protein localises to the cell membrane. Functionally, v region of the variable domain of immunoglobulin light chains that participates in the antigen recognition. Immunoglobulins, also known as antibodies, are membrane-bound or secreted glycoproteins produced by B lymphocytes. In the recognition phase of humoral immunity, the membrane-bound immunoglobulins serve as receptors which, upon binding of a specific antigen, trigger the clonal expansion and differentiation of B lymphocytes into immunoglobulins-secreting plasma cells. Secreted immunoglobulins mediate the effector phase of humoral immunity, which results in the elimination of bound antigens. The antigen binding site is formed by the variable domain of one heavy chain, together with that of its associated light chain. Thus, each immunoglobulin has two antigen binding sites with remarkable affinity for a particular antigen. The variable domains are assembled by a process called V-(D)-J rearrangement and can then be subjected to somatic hypermutations which, after exposure to antigen and selection, allow affinity maturation for a particular antigen. The sequence is that of Immunoglobulin kappa variable 5-2 from Homo sapiens (Human).